A 557-amino-acid polypeptide reads, in one-letter code: TBCC domain-containing protein 1 (557 aa).

The region spanning 290-435 (TTKRAKIACN…LEDHMARTGL (146 aa)) is the C-CAP/cofactor C-like domain.

The protein belongs to the TBCC family.

It is found in the cytoplasm. The protein resides in the cytoskeleton. Its subcellular location is the microtubule organizing center. The protein localises to the centrosome. It localises to the spindle pole. Its function is as follows. Plays a role in the regulation of centrosome and Golgi apparatus positioning, with consequences on cell shape and cell migration. The protein is TBCC domain-containing protein 1 (TBCCD1) of Bos taurus (Bovine).